Reading from the N-terminus, the 871-residue chain is Synaptonemal complex protein 1 (871 aa).

A disordered region spans residues 1–40; the sequence is MQKLGFPAMKSLDKPRSLSGSANMYSFSNRKPPDSVSSGS. Positions 18–40 are enriched in polar residues; the sequence is LSGSANMYSFSNRKPPDSVSSGS. Coiled coils occupy residues 58–304 and 331–608; these read MRTD…DKKN and LALD…EESK. Disordered stretches follow at residues 708 to 741 and 778 to 871; these read VMSD…RSEH and SVLS…YAFD. The span at 719 to 728 shows a compositional bias: polar residues; that stretch reads VNSNKNYSIS. Residues 729 to 741 show a composition bias toward basic and acidic residues; it reads KDSRLGGSKRSEH. A compositionally biased stretch (polar residues) spans 831–847; sequence LTPQSIAKGTGMTSHAR.

The protein localises to the nucleus. In terms of biological role, required for chromosome synapsis and normal fidelity of crossing over. This chain is Synaptonemal complex protein 1 (ZYP1A), found in Arabidopsis thaliana (Mouse-ear cress).